The chain runs to 72 residues: DNA-directed RNA polymerase subunit omega (72 aa).

The protein belongs to the RNA polymerase subunit omega family. The RNAP catalytic core consists of 2 alpha, 1 beta, 1 beta' and 1 omega subunit. When a sigma factor is associated with the core the holoenzyme is formed, which can initiate transcription.

The enzyme catalyses RNA(n) + a ribonucleoside 5'-triphosphate = RNA(n+1) + diphosphate. In terms of biological role, promotes RNA polymerase assembly. Latches the N- and C-terminal regions of the beta' subunit thereby facilitating its interaction with the beta and alpha subunits. The sequence is that of DNA-directed RNA polymerase subunit omega from Staphylococcus aureus (strain Mu3 / ATCC 700698).